The sequence spans 609 residues: Protein alan shepard (609 aa).

The span at 1-12 (MHPRYSPAPPPL) shows a compositional bias: pro residues. The disordered stretch occupies residues 1 to 96 (MHPRYSPAPP…ASVAAAPPTP (96 aa)). Residue tyrosine 5 is modified to Phosphotyrosine. Residues 13-35 (HQQQQQQPPQQQQQQMGGPHQQQ) are compositionally biased toward low complexity. Residues 37–50 (GGVGPGTGHGGVGA) are compositionally biased toward gly residues. Composition is skewed to low complexity over residues 51–68 (AVGASNAGHMRAPPNSQQ) and 83–92 (SSSAASVAAA). A phosphotyrosine mark is found at tyrosine 152 and tyrosine 168. Residues 190 to 252 (PATTTYGQRV…AQNQNQQGGE (63 aa)) form a disordered region. The segment covering 204-252 (SPSNTNSSSSSNTGSQSGTLSTSLSNTTNTNTTMGPNGTAQNQNQQGGE) has biased composition (low complexity). RRM domains lie at 257–330 (TNLY…MAKQ) and 336–415 (TNLY…FADG). The disordered stretch occupies residues 583–609 (MTDSEQASTAASPDEAYTQYPHQAAPK).

In terms of biological role, has a role in the perception of gravity. The polypeptide is Protein alan shepard (Drosophila grimshawi (Hawaiian fruit fly)).